A 164-amino-acid polypeptide reads, in one-letter code: 2-keto-3-deoxy-D-glycero-D-galacto-9-phosphonononic acid phosphatase (164 aa).

The Mg(2+) site is built by Asp10 and Asp12. Residues Thr34, 54-56 (TGE), 64-67 (RAEK), and Lys80 each bind substrate. Asp103 contacts Mg(2+). Asn106 is a binding site for substrate.

It belongs to the KdsC family. Homotetramer. Mg(2+) serves as cofactor.

The catalysed reaction is 3-deoxy-D-glycero-beta-D-galacto-non-2-ulopyranosonate 9-phosphate + H2O = 3-deoxy-D-glycero-beta-D-galacto-non-2-ulopyranosonate + phosphate. Involved in the biosynthesis of 2-keto-3-deoxy-D-glycero-D-galacto-nononic acid used in cell-wall polysaccharides. Catalyzes the hydrolysis of 2-keto-3-deoxy-D-glycero-D-galacto-9-phosphonononic acid (KDN-9-P) to yield 2-keto-3-deoxy-D-glycero-D-galacto-nononic acid (KDN). Also able to hydrolyze N-acetylneuraminate-9-phosphate (Neu5NAc-9-P), 2-keto-3-deoxy-D-manno-octulosonate-8-phosphate (KDO-8-P), phosphoenolpyruvate (PEP), gluconate 6-phosphate, tyrosine phosphate ester and glucose-6-P as substrate. The polypeptide is 2-keto-3-deoxy-D-glycero-D-galacto-9-phosphonononic acid phosphatase (Bacteroides thetaiotaomicron (strain ATCC 29148 / DSM 2079 / JCM 5827 / CCUG 10774 / NCTC 10582 / VPI-5482 / E50)).